Consider the following 954-residue polypeptide: Valine--tRNA ligase (954 aa).

The 'HIGH' region signature appears at 48–58; that stretch reads PNVTGSLHMGH. The 'KMSKS' region signature appears at 560 to 564; that stretch reads KMSKS. K563 provides a ligand contact to ATP. The stretch at 883 to 953 forms a coiled coil; sequence AGFINKEAEL…IQEQYKAIEA (71 aa).

The protein belongs to the class-I aminoacyl-tRNA synthetase family. ValS type 1 subfamily. In terms of assembly, monomer.

The protein localises to the cytoplasm. The enzyme catalyses tRNA(Val) + L-valine + ATP = L-valyl-tRNA(Val) + AMP + diphosphate. Functionally, catalyzes the attachment of valine to tRNA(Val). As ValRS can inadvertently accommodate and process structurally similar amino acids such as threonine, to avoid such errors, it has a 'posttransfer' editing activity that hydrolyzes mischarged Thr-tRNA(Val) in a tRNA-dependent manner. The sequence is that of Valine--tRNA ligase from Haemophilus influenzae (strain PittEE).